The primary structure comprises 162 residues: Transcription elongation factor GreA (162 aa).

Residues asparagine 48–glutamine 76 are a coiled coil. The tract at residues glycine 111 to leucine 132 is disordered.

It belongs to the GreA/GreB family.

In terms of biological role, necessary for efficient RNA polymerase transcription elongation past template-encoded arresting sites. The arresting sites in DNA have the property of trapping a certain fraction of elongating RNA polymerases that pass through, resulting in locked ternary complexes. Cleavage of the nascent transcript by cleavage factors such as GreA or GreB allows the resumption of elongation from the new 3'terminus. GreA releases sequences of 2 to 3 nucleotides. The protein is Transcription elongation factor GreA of Oenococcus oeni (strain ATCC BAA-331 / PSU-1).